The chain runs to 709 residues: Probable serine/threonine-protein kinase zyg-1 (709 aa).

The Protein kinase domain occupies 13–251 (FQNLQQIGQG…LKEIVMTDYV (239 aa)). ATP is bound by residues 19-27 (IGQGGFGVV) and lysine 41. Catalysis depends on aspartate 130, which acts as the Proton acceptor. Disordered stretches follow at residues 254–329 (KMGE…DRAR) and 591–633 (SSSQ…PAAT). Basic and acidic residues-rich tracts occupy residues 262–291 (SREH…ERRP) and 302–313 (SRRDPDGYRAAH). Polar residues predominate over residues 607–627 (PLSSRTTSSLNVRNGVSSDEN).

It belongs to the protein kinase superfamily. Ser/Thr protein kinase family.

The protein localises to the cytoplasm. Its subcellular location is the cytoskeleton. It localises to the microtubule organizing center. The protein resides in the centrosome. It is found in the centriole. It catalyses the reaction L-seryl-[protein] + ATP = O-phospho-L-seryl-[protein] + ADP + H(+). The catalysed reaction is L-threonyl-[protein] + ATP = O-phospho-L-threonyl-[protein] + ADP + H(+). Protein kinase that plays a central role in centrosome duplication. Paternal copy is required to regulate synthesis of daughter centrioles prior to fertilization. Maternal copy regulates centrosome duplication during later cell cycles. Functions upstream of sas-5 and sas-6, and is required for their localization to the centrosome. The polypeptide is Probable serine/threonine-protein kinase zyg-1 (zyg-1) (Caenorhabditis briggsae).